Consider the following 652-residue polypeptide: Interferon-induced GTP-binding protein Mx1 (652 aa).

The disordered stretch occupies residues 1-27 (MKERTSACRHGTPQKHPDTSEESQAME). The Dynamin-type G domain maps to 58 to 331 (DLALPAIAVI…LTSHICKSLP (274 aa)). The G1 motif stretch occupies residues 68-75 (GDQSSGKS). 68–75 (GDQSSGKS) contributes to the GTP binding site. The interval 93 to 95 (VTR) is G2 motif. Residues 169–172 (DLPG) are G3 motif. Residues 169-173 (DLPGI) and 238-241 (TKPD) each bind GTP. Residues 238-241 (TKPD) are G4 motif. Positions 270–273 (KCRG) are G5 motif. The bundle signaling element (BSE) stretch occupies residues 332–357 (ILENQINVNHQIASEELQKYGADIPE). Residues 357–526 (EDDSKRLSFL…HFQMEHIVYC (170 aa)) are middle domain. Residues 358 to 622 (DDSKRLSFLM…TSKCNWFLTE (265 aa)) form a stalk region. Residues 564 to 652 (TTEMTQHLNA…AQRKLAKFSN (89 aa)) enclose the GED domain.

It belongs to the TRAFAC class dynamin-like GTPase superfamily. Dynamin/Fzo/YdjA family. As to quaternary structure, homooligomer. Oligomerizes into multimeric filamentous or ring-like structures by virtue of its stalk domain. Oligomerization is critical for GTPase activity, protein stability, and recognition of viral target structures. Interacts with TRPC1, TRPC3, TRPC4, TRPC5, TRPC6 and TRPC7. Interacts with HSPA5. Interacts with TUBB/TUBB5. Interacts with DDX39A and DDX39B. In terms of processing, ISGylated.

The protein resides in the nucleus. Its subcellular location is the cytoplasm. It localises to the endoplasmic reticulum membrane. It is found in the perinuclear region. Functionally, interferon-induced dynamin-like GTPase which has antiviral activity against influenza A virus, (IAV) and Thogoto virus (THOV). Inhibits IAV by interfering with the process of primary transcription, probably by affecting the viral polymerase function. The polypeptide is Interferon-induced GTP-binding protein Mx1 (Mx1) (Rattus norvegicus (Rat)).